A 657-amino-acid polypeptide reads, in one-letter code: UvrABC system protein B (657 aa).

The 139-residue stretch at Ala25–Asn163 folds into the Helicase ATP-binding domain. Position 38–45 (Gly38–Thr45) interacts with ATP. The Beta-hairpin signature appears at Tyr91–Ile114. The DEAD box signature appears at Leu130–Asp133. The Helicase C-terminal domain maps to Gln433–Leu599. The 36-residue stretch at Ala622–Leu657 folds into the UVR domain.

This sequence belongs to the UvrB family. In terms of assembly, forms a heterotetramer with UvrA during the search for lesions. Interacts with UvrC in an incision complex.

It localises to the cytoplasm. Functionally, the UvrABC repair system catalyzes the recognition and processing of DNA lesions. A damage recognition complex composed of 2 UvrA and 2 UvrB subunits scans DNA for abnormalities. Upon binding of the UvrA(2)B(2) complex to a putative damaged site, the DNA wraps around one UvrB monomer. DNA wrap is dependent on ATP binding by UvrB and probably causes local melting of the DNA helix, facilitating insertion of UvrB beta-hairpin between the DNA strands. Then UvrB probes one DNA strand for the presence of a lesion. If a lesion is found the UvrA subunits dissociate and the UvrB-DNA preincision complex is formed. This complex is subsequently bound by UvrC and the second UvrB is released. If no lesion is found, the DNA wraps around the other UvrB subunit that will check the other stand for damage. The chain is UvrABC system protein B from Campylobacter hominis (strain ATCC BAA-381 / DSM 21671 / CCUG 45161 / LMG 19568 / NCTC 13146 / CH001A).